Consider the following 154-residue polypeptide: Transcriptional repressor NrdR (154 aa).

A zinc finger spans residues C3–C34. Positions L49–D139 constitute an ATP-cone domain.

This sequence belongs to the NrdR family. Zn(2+) serves as cofactor.

Negatively regulates transcription of bacterial ribonucleotide reductase nrd genes and operons by binding to NrdR-boxes. The chain is Transcriptional repressor NrdR from Paracoccus denitrificans (strain Pd 1222).